A 682-amino-acid chain; its full sequence is MTTQPRKILVTCALPYANGAIHLGHMLEHIQADIWVRFQRMRGNKIHFVCADDAHGTPIMLNADKLGITPEELIAKAKADHIRDFAGFNISFDNYHSTHSEENKQLTAEIYNKLKANGFIKSKVISQLFDPEKNMFLPDRFVKGTCPKCKAEDQYGDNCEVCASTYSPMDLINPRSAVSGTTPIVKESEHFFFDLPAFEGMLKEWTRSGSLQSEIANKMQEWFESGLQQWDISRDAPYFGFEIPGAKDKFFYVWLDAPIGYMASFKNLCEREGIDFNEFWAEGSDAELYHFIGKDIVYFHSLFWPAMLEGSGYRKPTNVFAHGYVTVDGAKMSKSRGTFIQASTYLNHIDPECLRYYYAAKLNDRIEDLDFNLEDFVQRVNTDIVNKLVNLASRNAGFIAKRFEGKLSDKLEDEALFAEFTAQAEQIAAYYESREYNKAIREIMALTDKANKYIDEKAPWVIAKEEGKEAELQAVCSMGIELFRVLMSYLKPVLPKLAERAEAFLQAELRWDNIHQPLLGHTLAPFKALFSRLEKKQIDAVVEETKALFAAANKAAEKTEAKPTALSAVKPIAETITIDDLAKLDMRVAKVLKCEAVPESNKLLRFELDLGDHTRQVFSGIKAAYNKPEELEGRFVIMVANLAPRQMKFGVSEGMILSAGTGGSDLFLLSADNGVTAGMQVK.

The 'HIGH' region signature appears at 15-25; it reads PYANGAIHLGH. Zn(2+) is bound by residues C146, C149, C159, and C162. The 'KMSKS' region motif lies at 331–335; sequence KMSKS. An ATP-binding site is contributed by K334. The region spanning 580-682 is the tRNA-binding domain; that stretch reads DLAKLDMRVA…NGVTAGMQVK (103 aa).

This sequence belongs to the class-I aminoacyl-tRNA synthetase family. MetG type 1 subfamily. As to quaternary structure, homodimer. Zn(2+) is required as a cofactor.

The protein resides in the cytoplasm. The catalysed reaction is tRNA(Met) + L-methionine + ATP = L-methionyl-tRNA(Met) + AMP + diphosphate. In terms of biological role, is required not only for elongation of protein synthesis but also for the initiation of all mRNA translation through initiator tRNA(fMet) aminoacylation. The sequence is that of Methionine--tRNA ligase from Haemophilus influenzae (strain 86-028NP).